Reading from the N-terminus, the 111-residue chain is Universal stress protein B (111 aa).

Residues 1 to 21 traverse the membrane as a helical segment; it reads MISTVSLFWALCVVCIVNMAR. The Cytoplasmic portion of the chain corresponds to 22–89; the sequence is YFSSLRALLV…IRRCERVRRQ (68 aa). Residues 90 to 110 form a helical membrane-spanning segment; that stretch reads FLLTSALCGLVVVSLIALMIW. Residue His111 is a topological domain, periplasmic.

It belongs to the universal stress protein B family.

Its subcellular location is the cell inner membrane. This is Universal stress protein B (uspB) from Salmonella choleraesuis (strain SC-B67).